The chain runs to 165 residues: ATP synthase subunit b (165 aa).

A helical transmembrane segment spans residues 10–30 (LIFWMLLSFGIVFAVLAKYGF).

This sequence belongs to the ATPase B chain family. In terms of assembly, F-type ATPases have 2 components, F(1) - the catalytic core - and F(0) - the membrane proton channel. F(1) has five subunits: alpha(3), beta(3), gamma(1), delta(1), epsilon(1). F(0) has three main subunits: a(1), b(2) and c(10-14). The alpha and beta chains form an alternating ring which encloses part of the gamma chain. F(1) is attached to F(0) by a central stalk formed by the gamma and epsilon chains, while a peripheral stalk is formed by the delta and b chains.

It is found in the cell inner membrane. F(1)F(0) ATP synthase produces ATP from ADP in the presence of a proton or sodium gradient. F-type ATPases consist of two structural domains, F(1) containing the extramembraneous catalytic core and F(0) containing the membrane proton channel, linked together by a central stalk and a peripheral stalk. During catalysis, ATP synthesis in the catalytic domain of F(1) is coupled via a rotary mechanism of the central stalk subunits to proton translocation. Functionally, component of the F(0) channel, it forms part of the peripheral stalk, linking F(1) to F(0). This chain is ATP synthase subunit b, found in Bacteroides fragilis (strain ATCC 25285 / DSM 2151 / CCUG 4856 / JCM 11019 / LMG 10263 / NCTC 9343 / Onslow / VPI 2553 / EN-2).